A 454-amino-acid polypeptide reads, in one-letter code: Probable N-octanoylanthranilate hydrolase AqdA2 (454 aa).

The Acyl-ester intermediate role is filled by serine 185. Catalysis depends on charge relay system residues glutamate 306 and histidine 379.

This sequence belongs to the type-B carboxylesterase/lipase family.

It catalyses the reaction N-octanoylanthranilate + H2O = anthranilate + octanoate + H(+). Its function is as follows. Involved in the degradation of the Pseudomonas aeruginosa quorum sensing signal molecules HHQ (2-heptyl-4-quinolone) and PQS (2-heptyl-3-hydroxy-4-quinolone) to anthranilic acid. Probably catalyzes the hydrolysis of N-octanoylanthranilic acid to anthranilic acid. This is Probable N-octanoylanthranilate hydrolase AqdA2 from Rhodococcus erythropolis (Arthrobacter picolinophilus).